The chain runs to 514 residues: Importin subunit alpha-3 (514 aa).

Residues 1–51 enclose the IBB domain; it reads MSSNRQAYYKNNAKEQIGKEKRNEEVVSIRKDKREEAISKRRNINTQIEDD. Residues 1 to 62 are disordered; it reads MSSNRQAYYK…ETSTTPPGPF (62 aa). The segment covering 12 to 39 has biased composition (basic and acidic residues); it reads NAKEQIGKEKRNEEVVSIRKDKREEAIS. ARM repeat units lie at residues 101–142, 143–187, 188–226, 227–271, 272–311, 312–353, 354–393, and 394–436; these read IDDL…TSEQ, TQAV…FRDY, CLELGILQPLLQFINPEIPIGFLRNVTWVIVNLCRCKDP, APSP…EHIQ, MVIEAQVVTHLVPLLGHVDVKVQTAALRAVGNIVTGTDEQ, TQLV…NQQQ, VQDVFDAGIMPMIIHLLDRGDFPTQKEAAWAISNVTISGR, and PNQV…KMAG. The interval 485-514 is disordered; the sequence is GNVEGAQSSAFGGDVPPVPDAPNGGWNFGK.

Belongs to the importin alpha family. In terms of assembly, forms a complex with an importin beta subunit. May interact with transcription factor cebp-1 (via N-terminus). Interacts with cmk-1; affinity for cmk-1 is increased in the presence of Ca(2+) and calmodulin and leads to increased nuclear accumulation of cmk-1 in FLP neurons upon prolonged heat activation. As to expression, expressed in larval and adult germline and somatic tissues, including neurons.

The protein resides in the cytoplasm. It is found in the nucleus. Binds specifically and directly to substrates containing either a simple or bipartite NLS motif. Promotes docking of import substrates to the nuclear envelope. Seems to act as a cytosolic receptor for both simple and bipartite NLS motifs. Necessary for correct nucleoporin localization within the germline. Essential gene for embryonic and larval development. May be dispensable for axon development, but required for axon regeneration in both mechanosensory and motor neurons. Required for oogenic development, ima-1 and ima-2 cannot functionally compensate for loss of ima-3. This chain is Importin subunit alpha-3 (ima-3), found in Caenorhabditis elegans.